A 154-amino-acid polypeptide reads, in one-letter code: Bacterial ferritin (154 aa).

Residues 1-145 enclose the Ferritin-like diiron domain; sequence MQGNQAVVDY…QQLRLIELIG (145 aa). Fe cation is bound by residues E18, E51, H54, E93, E127, and H130.

Belongs to the bacterioferritin family. In terms of assembly, heterooligomer of 24 subunits, arranged as 12 dimers, that are packed together to form an approximately spherical molecule with a central cavity, in which large amounts of iron can be deposited.

The catalysed reaction is 4 Fe(2+) + O2 + 4 H(+) = 4 Fe(3+) + 2 H2O. It carries out the reaction Fe(2+)(in) = Fe(2+)(out). Iron-storage protein, whose ferroxidase center binds Fe(2+), oxidizes it using dioxygen to Fe(3+), and participates in the subsequent Fe(3+) oxide mineral core formation within the central cavity of the BFR protein shell. This Neisseria meningitidis serogroup A / serotype 4A (strain DSM 15465 / Z2491) protein is Bacterial ferritin (bfrA).